The chain runs to 245 residues: Probable transcriptional regulatory protein LVIS_1199 (245 aa).

The segment at 1 to 23 (MSGHSKWHNIQGRKNAQDAKRGK) is disordered.

This sequence belongs to the TACO1 family.

It is found in the cytoplasm. The chain is Probable transcriptional regulatory protein LVIS_1199 from Levilactobacillus brevis (strain ATCC 367 / BCRC 12310 / CIP 105137 / JCM 1170 / LMG 11437 / NCIMB 947 / NCTC 947) (Lactobacillus brevis).